An 809-amino-acid polypeptide reads, in one-letter code: Ribonuclease Z 1 (809 aa).

The disordered stretch occupies residues 74–93 (ISSPDTYDSSSSSSTTSVSD).

This sequence belongs to the RNase Z family. It depends on Zn(2+) as a cofactor.

It is found in the nucleus. The protein localises to the cytoplasm. The catalysed reaction is Endonucleolytic cleavage of RNA, removing extra 3' nucleotides from tRNA precursor, generating 3' termini of tRNAs. A 3'-hydroxy group is left at the tRNA terminus and a 5'-phosphoryl group is left at the trailer molecule.. In terms of biological role, zinc phosphodiesterase, which displays some tRNA 3'-processing endonuclease activity. May be involved in tRNA maturation, by removing a 3'-trailer from precursor tRNA. This chain is Ribonuclease Z 1 (trz1), found in Schizosaccharomyces pombe (strain 972 / ATCC 24843) (Fission yeast).